The following is a 292-amino-acid chain: F-box only protein 16 (292 aa).

Residues 86–132 (LDFTTKLPRVLSLYIFSFLDPRSLCRCAQVCWHWKNLAELDQLWMLK) enclose the F-box domain. 2 disordered regions span residues 188-224 (SPEE…SSDK) and 238-292 (RDPM…PLCP). A compositionally biased stretch (low complexity) spans 194 to 204 (SPLSAFRSSSS). Positions 260 to 273 (RQSHDKKNKLQDRT) are enriched in basic and acidic residues.

In terms of assembly, part of a SCF (SKP1-cullin-F-box) protein ligase complex. Expressed in heart, spleen and colon.

Its function is as follows. Probably recognizes and binds to some phosphorylated proteins and promotes their ubiquitination and degradation. The sequence is that of F-box only protein 16 (FBXO16) from Homo sapiens (Human).